The sequence spans 130 residues: Large ribosomal subunit protein bL19 (130 aa).

This sequence belongs to the bacterial ribosomal protein bL19 family.

In terms of biological role, this protein is located at the 30S-50S ribosomal subunit interface and may play a role in the structure and function of the aminoacyl-tRNA binding site. This chain is Large ribosomal subunit protein bL19, found in Psychrobacter arcticus (strain DSM 17307 / VKM B-2377 / 273-4).